The following is a 298-amino-acid chain: NADH-cytochrome b5 reductase 2 (298 aa).

Residues 13–33 (FLPFAIGAVAVTAGALYLNGW) traverse the membrane as a helical segment. In terms of domain architecture, FAD-binding FR-type spans 48 to 152 (RKWIDLELEK…QGPIPKWQWK (105 aa)). 155–190 (SFDTITLLGGGTGITPLYQLVHHITQNKEDKTKINL) contacts FAD.

The protein belongs to the flavoprotein pyridine nucleotide cytochrome reductase family. Requires FAD as cofactor.

It localises to the mitochondrion outer membrane. The catalysed reaction is 2 Fe(III)-[cytochrome b5] + NADH = 2 Fe(II)-[cytochrome b5] + NAD(+) + H(+). Functionally, may mediate the reduction of outer membrane cytochrome b5. This chain is NADH-cytochrome b5 reductase 2 (MCR1), found in Candida glabrata (strain ATCC 2001 / BCRC 20586 / JCM 3761 / NBRC 0622 / NRRL Y-65 / CBS 138) (Yeast).